The primary structure comprises 305 residues: UDP-3-O-acyl-N-acetylglucosamine deacetylase (305 aa).

Zn(2+)-binding residues include H79, H238, and D242. Catalysis depends on H265, which acts as the Proton donor.

The protein belongs to the LpxC family. Zn(2+) is required as a cofactor.

The catalysed reaction is a UDP-3-O-[(3R)-3-hydroxyacyl]-N-acetyl-alpha-D-glucosamine + H2O = a UDP-3-O-[(3R)-3-hydroxyacyl]-alpha-D-glucosamine + acetate. It participates in glycolipid biosynthesis; lipid IV(A) biosynthesis; lipid IV(A) from (3R)-3-hydroxytetradecanoyl-[acyl-carrier-protein] and UDP-N-acetyl-alpha-D-glucosamine: step 2/6. In terms of biological role, catalyzes the hydrolysis of UDP-3-O-myristoyl-N-acetylglucosamine to form UDP-3-O-myristoylglucosamine and acetate, the committed step in lipid A biosynthesis. The sequence is that of UDP-3-O-acyl-N-acetylglucosamine deacetylase from Shigella dysenteriae serotype 1 (strain Sd197).